The chain runs to 212 residues: LexA repressor (212 aa).

Positions 29-49 form a DNA-binding region, H-T-H motif; that stretch reads VREIGEAVGLSSSSTIHGHIE. Catalysis depends on for autocatalytic cleavage activity residues serine 133 and lysine 171.

The protein belongs to the peptidase S24 family. Homodimer.

The enzyme catalyses Hydrolysis of Ala-|-Gly bond in repressor LexA.. In terms of biological role, represses a number of genes involved in the response to DNA damage (SOS response), including recA and lexA. In the presence of single-stranded DNA, RecA interacts with LexA causing an autocatalytic cleavage which disrupts the DNA-binding part of LexA, leading to derepression of the SOS regulon and eventually DNA repair. This is LexA repressor from Leuconostoc mesenteroides subsp. mesenteroides (strain ATCC 8293 / DSM 20343 / BCRC 11652 / CCM 1803 / JCM 6124 / NCDO 523 / NBRC 100496 / NCIMB 8023 / NCTC 12954 / NRRL B-1118 / 37Y).